Consider the following 322-residue polypeptide: uncharacterized protein (322 aa).

Positions 1 to 32 (MRDGIGKRAASALFLCGVLVMLAVSSAIVSSA) are cleaved as a signal peptide.

This is an uncharacterized protein from Bacillus subtilis (strain 168).